We begin with the raw amino-acid sequence, 428 residues long: GTPase Obg (428 aa).

Positions 1-158 (MFIDTAKIFV…RWVALELKLL (158 aa)) constitute an Obg domain. An OBG-type G domain is found at 159–331 (ADVGLLGFPN…VIKEAARMLK (173 aa)). Residues 165–172 (GFPNVGKS), 190–194 (FTTLK), 212–215 (DVPG), 282–285 (NKCD), and 312–314 (SAA) contribute to the GTP site. Mg(2+)-binding residues include Ser172 and Thr192. Residues 345 to 428 (RFIPEDKKFT…LNDFEFEYLL (84 aa)) enclose the OCT domain.

The protein belongs to the TRAFAC class OBG-HflX-like GTPase superfamily. OBG GTPase family. In terms of assembly, monomer. Mg(2+) is required as a cofactor.

It localises to the cytoplasm. Its function is as follows. An essential GTPase which binds GTP, GDP and possibly (p)ppGpp with moderate affinity, with high nucleotide exchange rates and a fairly low GTP hydrolysis rate. Plays a role in control of the cell cycle, stress response, ribosome biogenesis and in those bacteria that undergo differentiation, in morphogenesis control. The chain is GTPase Obg from Clostridium perfringens (strain ATCC 13124 / DSM 756 / JCM 1290 / NCIMB 6125 / NCTC 8237 / Type A).